We begin with the raw amino-acid sequence, 1067 residues long: Glycine--tRNA ligase, chloroplastic/mitochondrial 2 (1067 aa).

The N-terminal 50 residues, 1-50, are a transit peptide targeting the chloroplast and mitochondrion; that stretch reads MAILHFSLPLIVSFLRPHASPRFFLLPRSLSQSPFLSRRRFHRTSAVSSA. E513 serves as a coordination point for substrate. ATP contacts are provided by residues 589–596, 619–624, 744–745, and 859–862; these read RNSGINIE, LVVPQN, RL, and GLRR. Position 624-628 (624-628) interacts with substrate; sequence NLLNE. 855-859 contributes to the substrate binding site; that stretch reads NDPFG.

Belongs to the class-II aminoacyl-tRNA synthetase family. In terms of assembly, homodimer.

Its subcellular location is the plastid. The protein resides in the chloroplast. It is found in the mitochondrion. The catalysed reaction is tRNA(Gly) + glycine + ATP = glycyl-tRNA(Gly) + AMP + diphosphate. Its function is as follows. Catalyzes the attachment of glycine to tRNA(Gly). Is also able produce diadenosine tetraphosphate (Ap4A), a universal pleiotropic signaling molecule needed for cell regulation pathways, by direct condensation of 2 ATPs. The sequence is that of Glycine--tRNA ligase, chloroplastic/mitochondrial 2 from Arabidopsis thaliana (Mouse-ear cress).